The chain runs to 196 residues: Calcineurin B homologous protein 2 (196 aa).

G2 is lipidated: N-myristoyl glycine. EF-hand domains are found at residues 26–61 (ASLL…AVNP), 71–106 (FPDG…PKKP), 111–146 (SRRN…MVGV), and 152–187 (QLEN…MDVE). A Phosphoserine modification is found at S27. The Ca(2+) site is built by D124, D126, D128, K130, and E135. Residues 137–148 (LQVLRLMVGVQV) carry the Nuclear export signal motif. Residues D165, D167, D169, and E176 each coordinate Ca(2+).

Belongs to the calcineurin regulatory subunit family. CHP subfamily. Interacts with PPP3CA. Interacts with SLC9A1/NHE1; the interaction occurs in a calcium-dependent manner. As to expression, expressed in malignantly transformed cells but not detected in normal tissues.

It localises to the nucleus. The protein resides in the cytoplasm. Its subcellular location is the cell membrane. Functionally, functions as an integral cofactor in cell pH regulation by controlling plasma membrane-type Na(+)/H(+) exchange activity. Binds to and activates SLC9A1/NHE1 in a serum-independent manner, thus increasing pH and protecting cells from serum deprivation-induced death. Also plays a role in the regulation of cell proliferation and tumor growth by increasing the phosphatase activity of PPP3CA in a calcium-dependent manner. Activator of the calcineurin/NFAT signaling pathway. Involved in the cytoplasmic translocation of the transcription factor NFATC3 to the nucleus. The polypeptide is Calcineurin B homologous protein 2 (CHP2) (Homo sapiens (Human)).